A 413-amino-acid chain; its full sequence is ATP-dependent RNA helicase RhlB (413 aa).

A Q motif motif is present at residues 9 to 37 (QRFADLPLHPQILAALNDQNFEYCTPIQA). One can recognise a Helicase ATP-binding domain in the interval 40–217 (LPLTLQGKDV…FEDMNDPEYI (178 aa)). An ATP-binding site is contributed by 53–60 (AQTGTGKT). The short motif at 163–166 (DEAD) is the DEAD box element. One can recognise a Helicase C-terminal domain in the interval 241 to 388 (KMALLMTLLE…VSQYDPDSLI (148 aa)).

It belongs to the DEAD box helicase family. RhlB subfamily. As to quaternary structure, component of the RNA degradosome, which is a multiprotein complex involved in RNA processing and mRNA degradation.

It is found in the cytoplasm. The enzyme catalyses ATP + H2O = ADP + phosphate + H(+). Functionally, DEAD-box RNA helicase involved in RNA degradation. Has RNA-dependent ATPase activity and unwinds double-stranded RNA. The sequence is that of ATP-dependent RNA helicase RhlB from Actinobacillus succinogenes (strain ATCC 55618 / DSM 22257 / CCUG 43843 / 130Z).